We begin with the raw amino-acid sequence, 37 residues long: Large ribosomal subunit protein bL36 (37 aa).

Belongs to the bacterial ribosomal protein bL36 family.

The sequence is that of Large ribosomal subunit protein bL36 from Streptomyces griseus subsp. griseus (strain JCM 4626 / CBS 651.72 / NBRC 13350 / KCC S-0626 / ISP 5235).